Here is a 129-residue protein sequence, read N- to C-terminus: Small ribosomal subunit protein uS11 (129 aa).

The protein belongs to the universal ribosomal protein uS11 family. As to quaternary structure, part of the 30S ribosomal subunit. Interacts with proteins S7 and S18. Binds to IF-3.

Functionally, located on the platform of the 30S subunit, it bridges several disparate RNA helices of the 16S rRNA. Forms part of the Shine-Dalgarno cleft in the 70S ribosome. This is Small ribosomal subunit protein uS11 from Idiomarina loihiensis (strain ATCC BAA-735 / DSM 15497 / L2-TR).